The chain runs to 530 residues: PC4 and SFRS1-interacting protein (530 aa).

In terms of domain architecture, PWWP spans 1 to 64 (MTRDFKPGDL…PKDIFPYSEN (64 aa)). Residue K75 forms a Glycyl lysine isopeptide (Lys-Gly) (interchain with G-Cter in SUMO2) linkage. A disordered region spans residues 88–349 (PKVKFSSQQA…VEKKRETSMD (262 aa)). Residues 93 to 107 (SSQQASAKQSNASSD) are compositionally biased toward low complexity. Phosphoserine is present on residues S102, S105, and S106. The segment covering 113 to 135 (KETSVSKEDTDPEEKASNEDVTK) has biased composition (basic and acidic residues). Residues T115 and T122 each carry the phosphothreonine modification. The residue at position 129 (S129) is a Phosphoserine. T141 is subject to Phosphothreonine. The span at 144–153 (AARRGRKRKA) shows a compositional bias: basic residues. A Nuclear localization signal motif is present at residues 146-156 (RRGRKRKAEKQ). Residue T167 is modified to Phosphothreonine. Phosphoserine occurs at positions 177 and 206. The span at 213–261 (EEDKSKKKGQEEKQPKKQLKKDEEGQKEEEKPRKEPDKKEGKKEVESKR) shows a compositional bias: basic and acidic residues. S271 is subject to Phosphoserine. The residue at position 272 (T272) is a Phosphothreonine. S273 and S275 each carry phosphoserine. The span at 274 to 283 (DSEEEGDDQE) shows a compositional bias: acidic residues. The segment covering 287 to 302 (KRKGGRNFQTAHRRNM) has biased composition (basic residues). Basic and acidic residues predominate over residues 305-349 (GQHEKEAADRKRKQEEQMETEQQNKDEGKKPEVKKVEKKRETSMD). Coiled coils occupy residues 306–334 (QHEKEAADRKRKQEEQMETEQQNKDEGKK) and 371–395 (NRCIEALDELASLQVTMQQAQKHTE). Positions 340 to 417 (VEKKRETSMD…VSQVIMEKST (78 aa)) are integrase-binding domain (IBD). A Phosphoserine modification is found at S434. Residue T437 is modified to Phosphothreonine. At S443 the chain carries Phosphoserine. The span at 446-473 (EQRQHEEANKTKDQGKKGPNKKLEKEQT) shows a compositional bias: basic and acidic residues. Residues 446 to 530 (EQRQHEEANK…ISLKDSTLDN (85 aa)) are disordered. The segment covering 474 to 494 (GSKTLNGGSDAQDSNQPQHNG) has biased composition (polar residues). Positions 498 to 530 (EESKDNHEASSKKKPSSEERETEISLKDSTLDN) are enriched in basic and acidic residues. S514 is modified (phosphoserine). Citrulline is present on R517. Residue S522 is modified to Phosphoserine. A Phosphothreonine modification is found at T527.

Belongs to the HDGF family. As to quaternary structure, monomer. Interacts with IFRD1/PC4. Interacts (via IBD domain) with POGZ (via IBM motif) and CDCA7L (via IBM motifs). Interacts (via IBD domain) with KMT2A (via IBM motifs) with a moderate affinity whereas interacts with the KMT2A-MEN1 complex with a greater affinity; MEN1 enhances interaction of KMT2A with PSIP1. Interacts (via IBD domain) with IWS1 (via IBM motif), MED1 (via IBM motif) and DBF4 (via IBM motifs). In terms of processing, citrullinated by PADI4.

The protein localises to the nucleus. Transcriptional coactivator involved in neuroepithelial stem cell differentiation and neurogenesis. Involved in particular in lens epithelial cell gene regulation and stress responses. May play an important role in lens epithelial to fiber cell terminal differentiation. May play a protective role during stress-induced apoptosis. The protein is PC4 and SFRS1-interacting protein (PSIP1) of Bos taurus (Bovine).